The sequence spans 28 residues: Conotoxin Vi14b (28 aa).

Cystine bridges form between C4/C21 and C7/C18. N6-acetyllysine is present on residues K15 and K25.

The two N6-acetyllysines at position 15 and 25 have been deduced from the mass difference of 42. They are not common in venom proteins. As to expression, expressed by the venom gland.

It localises to the secreted. In terms of biological role, in vitro, inhibits proliferation of the mice ovarian cancer cells ID8. This Conus virgo (Virgin cone) protein is Conotoxin Vi14b.